Consider the following 321-residue polypeptide: Aspartate carbamoyltransferase catalytic subunit (321 aa).

Residues arginine 64 and threonine 65 each coordinate carbamoyl phosphate. Lysine 92 is an L-aspartate binding site. Residues arginine 114, histidine 142, and glutamine 145 each contribute to the carbamoyl phosphate site. L-aspartate is bound by residues arginine 175 and arginine 229. Carbamoyl phosphate contacts are provided by glycine 270 and proline 271.

Belongs to the aspartate/ornithine carbamoyltransferase superfamily. ATCase family. In terms of assembly, heterododecamer (2C3:3R2) of six catalytic PyrB chains organized as two trimers (C3), and six regulatory PyrI chains organized as three dimers (R2).

The enzyme catalyses carbamoyl phosphate + L-aspartate = N-carbamoyl-L-aspartate + phosphate + H(+). The protein operates within pyrimidine metabolism; UMP biosynthesis via de novo pathway; (S)-dihydroorotate from bicarbonate: step 2/3. In terms of biological role, catalyzes the condensation of carbamoyl phosphate and aspartate to form carbamoyl aspartate and inorganic phosphate, the committed step in the de novo pyrimidine nucleotide biosynthesis pathway. The polypeptide is Aspartate carbamoyltransferase catalytic subunit (Azorhizobium caulinodans (strain ATCC 43989 / DSM 5975 / JCM 20966 / LMG 6465 / NBRC 14845 / NCIMB 13405 / ORS 571)).